The following is a 364-amino-acid chain: D-alanine--D-alanine ligase (364 aa).

An ATP-grasp domain is found at 141 to 346; that stretch reads KNLFAQAGLR…YSELIERLIA (206 aa). Residue 174 to 229 coordinates ATP; it reads EQELGYPCFVKPANAGSSVGISKCKQRDDLKTAFAEAFKYDRKIIIEESIVGREIE. D300, E313, and N315 together coordinate Mg(2+).

Belongs to the D-alanine--D-alanine ligase family. The cofactor is Mg(2+). Mn(2+) serves as cofactor.

Its subcellular location is the cytoplasm. It carries out the reaction 2 D-alanine + ATP = D-alanyl-D-alanine + ADP + phosphate + H(+). It functions in the pathway cell wall biogenesis; peptidoglycan biosynthesis. Cell wall formation. The chain is D-alanine--D-alanine ligase from Geobacillus thermodenitrificans (strain NG80-2).